The primary structure comprises 343 residues: Ribonucleoside-diphosphate reductase small subunit (343 aa).

Fe cation contacts are provided by aspartate 101, glutamate 131, and histidine 134. Tyrosine 138 is a catalytic residue. The helical transmembrane segment at 188-208 (ILMILIEGIFFSASFAAIAYL) threads the bilayer. The Fe cation site is built by glutamate 194, glutamate 228, and histidine 231.

Belongs to the ribonucleoside diphosphate reductase small chain family. As to quaternary structure, heterotetramer composed of a homodimer of the large subunit (R1) and a homodimer of the small subunit (R2). Larger multisubunit protein complex are also active, composed of (R1)n(R2)n. The cofactor is Fe cation.

It is found in the host membrane. It carries out the reaction a 2'-deoxyribonucleoside 5'-diphosphate + [thioredoxin]-disulfide + H2O = a ribonucleoside 5'-diphosphate + [thioredoxin]-dithiol. Functionally, ribonucleoside-diphosphate reductase holoenzyme provides the precursors necessary for viral DNA synthesis. Allows virus growth in non-dividing cells, as well as reactivation from latency in infected hosts. Catalyzes the biosynthesis of deoxyribonucleotides from the corresponding ribonucleotides. The sequence is that of Ribonucleoside-diphosphate reductase small subunit from Gallid herpesvirus 2 (strain Chicken/Md5/ATCC VR-987) (GaHV-2).